Consider the following 372-residue polypeptide: MVRLTVDLVMKNSNVLRNRKDESLARHLRRITHLNFSNKNIDEVEDLTMCRNLTVLYLYDNNINQIKNLGSNLTHLYLQNNCISCIENLSGLKRLEKLYLGGNCLTVVEGLEGLRELRELHIENQRLPPGEKLLFDPRTLHFLGISLSVLNISNNNIDELKDLAVLENLTQFVAADNQLKEIKDLEFVLSKWTKLCRMDLSGNPVCLKPKYREKVTIISKTLEILDGKEIKEMARQFLLNWKASRISKKKKNLENMTGPSLLPQLYESDNYRSLLPVYNQNFRHQLLEQPKYIVMAHTQSCNKHGQLQRSAGKRNISVIEDIKSEARGMESFSGCIPESECVGGQHGNERPGYPTNLINLWKGEKDETEGIP.

LRR repeat units lie at residues 30–51 (RITH…TMCR), 52–71 (NLTV…NLGS), 72–93 (NLTH…SGLK), 94–115 (RLEK…EGLR), 116–137 (ELRE…LFDP), 146–167 (SLSV…AVLE), and 168–189 (NLTQ…EFVL). Residues 203–241 (NPVCLKPKYREKVTIISKTLEILDGKEIKEMARQFLLNW) form the LRRCT domain.

The protein resides in the cytoplasm. It is found in the cytoskeleton. It localises to the microtubule organizing center. The protein localises to the centrosome. Functionally, may regulate phosphatase activity of protein phosphatase 1 (PP1) complexes. The polypeptide is Protein phosphatase 1 regulatory subunit 42 (ppp1r42) (Xenopus laevis (African clawed frog)).